The sequence spans 355 residues: 45 kDa calcium-binding protein (355 aa).

The N-terminal stretch at 1 to 29 is a signal peptide; the sequence is MASRQGPLCGLAPCCLWLLGVILLMNASA. N26 carries N-linked (GlcNAc...) asparagine glycosylation. 2 consecutive EF-hand domains span residues 91-126 and 130-165; these read KSRRKLMVIFSKVDLNTDRRISAKEMQKWIMQKTAE and EAVAESRAHFRAVDPDGDGHVSWDEYKVKFLATKGH. Position 92 is a phosphoserine (S92). Ca(2+) is bound by residues D104, N106, D108, R110, E115, D143, D145, D147, H149, and E154. 2 positions are modified to phosphothreonine: T186 and T210. EF-hand domains are found at residues 226–261, 271–306, and 307–342; these read MLQFMVKEIIRDLDQDGDKKLSLSEFISLPVGTVEN, WVRDRKREFEELIDANHDGIVTMAELEDYMDPMNEF, and SALNEAKQMIAIADENQNHYLEPEEVLKYSEFFTGS. Positions 239, 241, 243, 245, and 250 each coordinate Ca(2+). Residue T258 is modified to Phosphothreonine. D284, N286, and D288 together coordinate Ca(2+). T292 carries the phosphothreonine modification. The Ca(2+) site is built by E295, D320, N322, N324, Y326, and E331. A necessary for intracellular retention in Golgi apparatus lumen region spans residues 302-355; the sequence is PMNEFSALNEAKQMIAIADENQNHYLEPEEVLKYSEFFTGSKLVDYARSVHEEF.

It belongs to the CREC family.

The protein resides in the golgi apparatus lumen. Its function is as follows. May regulate calcium-dependent activities in the endoplasmic reticulum lumen or post-ER compartment. This is 45 kDa calcium-binding protein (SDF4) from Capra hircus (Goat).